The chain runs to 656 residues: Mucin-20 (656 aa).

Positions 1–21 are cleaved as a signal peptide; sequence MGSVWGLAVPLLVFCWKVGVS. 3 stretches are compositionally biased toward polar residues: residues 85 to 96, 114 to 125, and 159 to 170; these read ATSISSEVNSRD, PAASSLEAQTTS, and TTSPAPSFLDTQ. Disordered regions lie at residues 85–125, 159–232, and 329–348; these read ATSI…QTTS, TTSP…TQTI, and YLSSESSSSSDSSAGVLSSS. The span at 171–227 shows a compositional bias: low complexity; it reads TTSPEPSSLTTSPAPSSLITSPTPSSLTTSPAPSFLDTQTTSPAPSSLTTSPAPSSL. A run of 5 repeats spans residues 180–188, 189–197, 198–206, 210–218, and 219–227. Residues 180 to 227 are approximate repeats; that stretch reads TTSPAPSSLITSPTPSSLTTSPAPSFLDTQTTSPAPSSLTTSPAPSSL. 2 N-linked (GlcNAc...) asparagine glycosylation sites follow: Asn366 and Asn570. The tract at residues 399-603 is involved in oligomerization; it reads TAALFTSEIL…WIRKTTKHDP (205 aa). Positions 560-573 are enriched in polar residues; the sequence is STTASTSKNPNITL. Positions 560 to 592 are disordered; the sequence is STTASTSKNPNITLTKTTASPKPPTHPTTSAST. Residues 604-656 form an interaction with MET region; that stretch reads GEDGGFLLVRLTVASPKDLTEHNAREKLMNQLRRELHARMPLVHMSFLSIRRG.

Interacts with MET; oligomerization increases affinity for MET. Highly expressed in kidney. Up-regulated in renal tissues during renal injury.

The protein localises to the secreted. Its subcellular location is the apical cell membrane. The protein resides in the basolateral cell membrane. It is found in the cell projection. It localises to the microvillus membrane. In terms of biological role, may regulate MET signaling cascade. Seems to decrease hepatocyte growth factor (HGF)-induced transient MAPK activation. Blocks GRB2 recruitment to MET thus suppressing the GRB2-RAS pathway. Inhibits HGF-induced proliferation of MMP1 and MMP9 expression. The chain is Mucin-20 (Muc20) from Mus musculus (Mouse).